Here is a 407-residue protein sequence, read N- to C-terminus: Naringenin 8-dimethylallyltransferase 2, chloroplastic (407 aa).

The N-terminal 23 residues, 1 to 23 (MGFVLPASFPGASSITTGGSCLR), are a transit peptide targeting the chloroplast. The next 8 helical transmembrane spans lie at 117–137 (FCRP…SLVA), 145–165 (SLAF…IHIF), 206–226 (ILGL…TVFI), 248–268 (VLTA…GFFL), 285–305 (LIFC…FKDI), 328–348 (VFWI…LVGA), 352–372 (ILWS…VLWY), and 383–403 (VVLQ…YCLI).

This sequence belongs to the UbiA prenyltransferase family. The cofactor is Mg(2+). Mn(2+) serves as cofactor.

The protein resides in the plastid. It is found in the chloroplast membrane. The catalysed reaction is (2S)-naringenin + dimethylallyl diphosphate = sophoraflavanone B + diphosphate. Functionally, involved in the biosynthesis of sophoraflavanone G (SFG). Can use flavanones (naringenin, liquiritigenin and hesperetin) as substrates, but not flavonols or isoflavones. Shows a strict specificity for dimethylallyl diphosphate. This chain is Naringenin 8-dimethylallyltransferase 2, chloroplastic (N8DT-2), found in Sophora flavescens (Shrubby sophora).